A 500-amino-acid polypeptide reads, in one-letter code: Probable malate:quinone oxidoreductase (500 aa).

This sequence belongs to the MQO family. The cofactor is FAD.

The catalysed reaction is (S)-malate + a quinone = a quinol + oxaloacetate. It functions in the pathway carbohydrate metabolism; tricarboxylic acid cycle; oxaloacetate from (S)-malate (quinone route): step 1/1. The chain is Probable malate:quinone oxidoreductase from Prochlorococcus marinus (strain MIT 9211).